The primary structure comprises 66 residues: Large ribosomal subunit protein bL35 (66 aa).

Residues M1–L44 are compositionally biased toward basic residues. A disordered region spans residues M1 to A48.

Belongs to the bacterial ribosomal protein bL35 family.

In Legionella pneumophila (strain Corby), this protein is Large ribosomal subunit protein bL35.